The primary structure comprises 880 residues: Valine--tRNA ligase (880 aa).

Residues 49-59 (PNVTGKLHLGH) carry the 'HIGH' region motif. Positions 525–529 (KMSKS) match the 'KMSKS' region motif. Lys-528 serves as a coordination point for ATP. The stretch at 809-879 (LAGLLDLEEE…AVRARIKELK (71 aa)) forms a coiled coil.

It belongs to the class-I aminoacyl-tRNA synthetase family. ValS type 1 subfamily. Monomer.

The protein localises to the cytoplasm. It carries out the reaction tRNA(Val) + L-valine + ATP = L-valyl-tRNA(Val) + AMP + diphosphate. Its function is as follows. Catalyzes the attachment of valine to tRNA(Val). As ValRS can inadvertently accommodate and process structurally similar amino acids such as threonine, to avoid such errors, it has a 'posttransfer' editing activity that hydrolyzes mischarged Thr-tRNA(Val) in a tRNA-dependent manner. The protein is Valine--tRNA ligase of Halalkalibacterium halodurans (strain ATCC BAA-125 / DSM 18197 / FERM 7344 / JCM 9153 / C-125) (Bacillus halodurans).